Reading from the N-terminus, the 91-residue chain is Small ribosomal subunit protein uS19 (91 aa).

The interval 1-32 is disordered; the sequence is MPRSIKKGPFIDEHLDRKVQSAQASNSRRPIK. Positions 9-19 are enriched in basic and acidic residues; that stretch reads PFIDEHLDRKV.

Belongs to the universal ribosomal protein uS19 family.

Its function is as follows. Protein S19 forms a complex with S13 that binds strongly to the 16S ribosomal RNA. The polypeptide is Small ribosomal subunit protein uS19 (Acidithiobacillus ferrooxidans (strain ATCC 53993 / BNL-5-31) (Leptospirillum ferrooxidans (ATCC 53993))).